The primary structure comprises 536 residues: Pre-mRNA-splicing regulator female-lethal(2)D (536 aa).

A disordered region spans residues 1 to 91 (MSVAAMTMDD…LQQQQQQQQQ (91 aa)). Positions 28-39 (QNLNILNSSQNS) are enriched in low complexity. Residues 57–69 (HHHHHPHPHHHHH) show a composition bias toward basic residues. Positions 72–91 (QQQQQQQQQHLQQQQQQQQQ) are enriched in low complexity. Residues 254 to 319 (KSFSEEVKKS…KQAIKDEVVA (66 aa)) adopt a coiled-coil conformation. A disordered region spans residues 424 to 450 (APRTLPPKKSKLRGITTRRNSQLEEDH).

Belongs to the fl(2)d family. Component of the WMM complex, a N6-methyltransferase complex composed of a catalytic subcomplex, named MAC, and of an associated subcomplex, named MACOM. The MAC subcomplex is composed of Ime4/Mettl3 and Mettl14. The MACOM subcomplex is composed of fl(2)d, Flacc/Xio, Hakai, vir, and, in some cases of nito. Interacts with vir and msk. Part of a complex containing fl(2)d, Sxl and vir.

It is found in the nucleus. Associated component of the WMM complex, a complex that mediates N6-methyladenosine (m6A) methylation of mRNAs, a modification that plays a role in the efficiency of mRNA splicing and is required for sex determination. Required for sex determination and dosage compensation via Sxl alternative splicing: m6A methylation acts as a key regulator of Sxl pre-mRNA and promotes female-specific alternative splicing of Sxl, which determines female physiognomy. M6A methylation is also required for neuronal functions. Required for proper inclusion of regulated exons in Ubx transcripts, leading to isoforms Ia/b and IIa/b. The polypeptide is Pre-mRNA-splicing regulator female-lethal(2)D (Drosophila melanogaster (Fruit fly)).